The primary structure comprises 72 residues: Translation initiation factor IF-1 (72 aa).

The S1-like domain occupies 1–72 (MSKEEAIEVE…TRGRITYRAK (72 aa)).

This sequence belongs to the IF-1 family. In terms of assembly, component of the 30S ribosomal translation pre-initiation complex which assembles on the 30S ribosome in the order IF-2 and IF-3, IF-1 and N-formylmethionyl-tRNA(fMet); mRNA recruitment can occur at any time during PIC assembly.

It localises to the cytoplasm. Its function is as follows. One of the essential components for the initiation of protein synthesis. Stabilizes the binding of IF-2 and IF-3 on the 30S subunit to which N-formylmethionyl-tRNA(fMet) subsequently binds. Helps modulate mRNA selection, yielding the 30S pre-initiation complex (PIC). Upon addition of the 50S ribosomal subunit IF-1, IF-2 and IF-3 are released leaving the mature 70S translation initiation complex. This is Translation initiation factor IF-1 from Geotalea uraniireducens (strain Rf4) (Geobacter uraniireducens).